We begin with the raw amino-acid sequence, 133 residues long: Small ribosomal subunit protein uS8 (133 aa).

The protein belongs to the universal ribosomal protein uS8 family. Part of the 30S ribosomal subunit. Contacts proteins S5 and S12.

In terms of biological role, one of the primary rRNA binding proteins, it binds directly to 16S rRNA central domain where it helps coordinate assembly of the platform of the 30S subunit. This Leptospira interrogans serogroup Icterohaemorrhagiae serovar copenhageni (strain Fiocruz L1-130) protein is Small ribosomal subunit protein uS8.